The following is a 360-amino-acid chain: Peptide chain release factor 1 (360 aa).

Glutamine 234 is modified (N5-methylglutamine).

This sequence belongs to the prokaryotic/mitochondrial release factor family. Methylated by PrmC. Methylation increases the termination efficiency of RF1.

It is found in the cytoplasm. Functionally, peptide chain release factor 1 directs the termination of translation in response to the peptide chain termination codons UAG and UAA. The polypeptide is Peptide chain release factor 1 (Clostridium botulinum (strain Alaska E43 / Type E3)).